Reading from the N-terminus, the 488-residue chain is Glutamate--tRNA ligase (488 aa).

A 'HIGH' region motif is present at residues 12-22 (PSPTGYMHVGN). Residues cysteine 109, cysteine 111, cysteine 136, and histidine 138 each coordinate Zn(2+). A 'KMSKS' region motif is present at residues 253 to 257 (KLSKR). Residue lysine 256 participates in ATP binding.

It belongs to the class-I aminoacyl-tRNA synthetase family. Glutamate--tRNA ligase type 1 subfamily. In terms of assembly, monomer. Zn(2+) is required as a cofactor.

It is found in the cytoplasm. The catalysed reaction is tRNA(Glu) + L-glutamate + ATP = L-glutamyl-tRNA(Glu) + AMP + diphosphate. Its function is as follows. Catalyzes the attachment of glutamate to tRNA(Glu) in a two-step reaction: glutamate is first activated by ATP to form Glu-AMP and then transferred to the acceptor end of tRNA(Glu). In Clostridium tetani (strain Massachusetts / E88), this protein is Glutamate--tRNA ligase.